The following is a 233-amino-acid chain: ATP synthase subunit a, chloroplastic (233 aa).

4 helical membrane passes run 82–102, 121–141, 177–199, and 211–231; these read VPFI…GALI, INTT…AGIS, LFGN…PLIV, and SSIQ…EAIE.

It belongs to the ATPase A chain family. As to quaternary structure, F-type ATPases have 2 components, CF(1) - the catalytic core - and CF(0) - the membrane proton channel. CF(1) has five subunits: alpha(3), beta(3), gamma(1), delta(1), epsilon(1). CF(0) has four main subunits: a, b, b' and c.

The protein resides in the plastid. It localises to the chloroplast thylakoid membrane. In terms of biological role, key component of the proton channel; it plays a direct role in the translocation of protons across the membrane. In Galdieria sulphuraria (Red alga), this protein is ATP synthase subunit a, chloroplastic.